Reading from the N-terminus, the 505-residue chain is Aspartyl/glutamyl-tRNA(Asn/Gln) amidotransferase subunit B (505 aa).

Belongs to the GatB/GatE family. GatB subfamily. As to quaternary structure, heterotrimer of A, B and C subunits.

The catalysed reaction is L-glutamyl-tRNA(Gln) + L-glutamine + ATP + H2O = L-glutaminyl-tRNA(Gln) + L-glutamate + ADP + phosphate + H(+). It catalyses the reaction L-aspartyl-tRNA(Asn) + L-glutamine + ATP + H2O = L-asparaginyl-tRNA(Asn) + L-glutamate + ADP + phosphate + 2 H(+). Functionally, allows the formation of correctly charged Asn-tRNA(Asn) or Gln-tRNA(Gln) through the transamidation of misacylated Asp-tRNA(Asn) or Glu-tRNA(Gln) in organisms which lack either or both of asparaginyl-tRNA or glutaminyl-tRNA synthetases. The reaction takes place in the presence of glutamine and ATP through an activated phospho-Asp-tRNA(Asn) or phospho-Glu-tRNA(Gln). The chain is Aspartyl/glutamyl-tRNA(Asn/Gln) amidotransferase subunit B from Dinoroseobacter shibae (strain DSM 16493 / NCIMB 14021 / DFL 12).